A 345-amino-acid polypeptide reads, in one-letter code: Trace amine-associated receptor 6 (345 aa).

The Extracellular portion of the chain corresponds to 1-32 (MSSNSSLLVAVQLCYPNVNGSCVETLYSPGSR). 2 N-linked (GlcNAc...) asparagine glycosylation sites follow: N4 and N19. 2 disulfide bridges follow: C22/C186 and C105/C190. The helical transmembrane segment at 33-53 (VILYIVFGFGAVLAVFGNLLV) threads the bilayer. Residues 54-68 (MISILHFKQLHSPTN) are Cytoplasmic-facing. A helical transmembrane segment spans residues 69–89 (FLVASLACADFLVGVTVMPFS). Topologically, residues 90 to 107 (MVRTVESCWYFGRSFCTF) are extracellular. Residues 108-128 (HTCCDVAFCYSSLFHLCFISI) traverse the membrane as a helical segment. Over 129–147 (DRYIAVTDPLVYPTKFTVS) the chain is Cytoplasmic. Residues 148–168 (VSGICISVSWILPLMYSGAVF) form a helical membrane-spanning segment. Topologically, residues 169 to 202 (YTGVYDDGLEELSDALNCIGGCQTVVNQNWVLID) are extracellular. The chain crosses the membrane as a helical span at residues 203–223 (CLSFFIPTFIMIILYGNIFLV). Residues 224-259 (ARRQAKKIENTGSKTESSSESYKARVARRERKAAKT) are Cytoplasmic-facing. The chain crosses the membrane as a helical span at residues 260 to 276 (LGVTVVAFMISWLPYSI). Over 277-282 (DSLIDA) the chain is Extracellular. Residues 283–302 (FMGFITPAYIYEICCWCAYY) traverse the membrane as a helical segment. Topologically, residues 303 to 345 (NSAMNPLIYALFYPWFRKAIKVIVTGQVLKNSSATMNLFSEHI) are cytoplasmic.

Belongs to the G-protein coupled receptor 1 family.

The protein resides in the cell membrane. In terms of biological role, olfactory receptor specific for trace amines, such as beta-phenylethylamine (beta-PEA). Trace amine compounds are enriched in animal body fluids and act on trace amine-associated receptors (TAARs) to elicit both intraspecific and interspecific innate behaviors. Beta-PEA-binding causes a conformation change that triggers signaling via G(s)-class of G alpha proteins (GNAL or GNAS). In Pan troglodytes (Chimpanzee), this protein is Trace amine-associated receptor 6 (TAAR6).